The following is a 521-amino-acid chain: Protein translocase subunit SecD (521 aa).

The next 6 helical transmembrane spans lie at 8-28 (LKLA…LPNG), 359-379 (AGIL…VLFY), 388-408 (IALL…EATL), 410-430 (LPGM…NILI), 459-479 (IVDS…FGTG), and 483-503 (GFAL…LLLS).

Belongs to the SecD/SecF family. SecD subfamily. Forms a complex with SecF. Part of the essential Sec protein translocation apparatus which comprises SecA, SecYEG and auxiliary proteins SecDF-YajC and YidC.

It localises to the cell inner membrane. Its function is as follows. Part of the Sec protein translocase complex. Interacts with the SecYEG preprotein conducting channel. SecDF uses the proton motive force (PMF) to complete protein translocation after the ATP-dependent function of SecA. The protein is Protein translocase subunit SecD of Acetobacter pasteurianus (strain NBRC 105184 / IFO 3283-01).